Reading from the N-terminus, the 493-residue chain is Probable fatty acyl-CoA reductase 4 (493 aa).

The protein belongs to the fatty acyl-CoA reductase family. Expressed in the endodermal cell layer surrounding the central vasculature in roots. Expressed in the hilum region of seeds. Expressed in stamen filaments and receptacle of siliques.

It carries out the reaction a long-chain fatty acyl-CoA + 2 NADPH + 2 H(+) = a long-chain primary fatty alcohol + 2 NADP(+) + CoA. Its function is as follows. Catalyzes the reduction of fatty acyl-CoA to fatty alcohols. Catalyzes specifically the formation of C18:0 and C20:0 fatty alcohols. Provides the fatty alcohols required for synthesis of suberin in roots, seed coat and wound-induced leaf tissue. Provides the fatty alcohols required for synthesis of alkyl hydroxycinnamates in root waxes. The sequence is that of Probable fatty acyl-CoA reductase 4 from Arabidopsis thaliana (Mouse-ear cress).